Here is a 236-residue protein sequence, read N- to C-terminus: MRLAVNIDHIATLRNARQETQPDPVTAARLAELSGASGIVCHLREDRRHIKDRDLELLRATVQTKLDLEMAMTKEMKAIAIKTKPDLVTLVPEKRQELTTEGGLDVITRKDDLIPYIDELQQHGIPTSLFIEPTPEAITVATEVGAAFVELHTGKYSLLKSPKEIEAELLRLQDAASLAKKFGLRVVAGHGLNYENTAEIKRIKEIEEVSIGHALIARATLMGMSEAVKEMIRLLQ.

3-amino-2-oxopropyl phosphate is bound at residue Asn-6. 8–9 (DH) lines the 1-deoxy-D-xylulose 5-phosphate pocket. 3-amino-2-oxopropyl phosphate is bound at residue Arg-17. Catalysis depends on His-42, which acts as the Proton acceptor. Residues Arg-44 and His-49 each coordinate 1-deoxy-D-xylulose 5-phosphate. Glu-69 acts as the Proton acceptor in catalysis. Thr-99 contacts 1-deoxy-D-xylulose 5-phosphate. The Proton donor role is filled by His-190. Residues Gly-191 and 212–213 (GH) contribute to the 3-amino-2-oxopropyl phosphate site.

This sequence belongs to the PNP synthase family. As to quaternary structure, homooctamer; tetramer of dimers.

The protein localises to the cytoplasm. It catalyses the reaction 3-amino-2-oxopropyl phosphate + 1-deoxy-D-xylulose 5-phosphate = pyridoxine 5'-phosphate + phosphate + 2 H2O + H(+). It functions in the pathway cofactor biosynthesis; pyridoxine 5'-phosphate biosynthesis; pyridoxine 5'-phosphate from D-erythrose 4-phosphate: step 5/5. Functionally, catalyzes the complicated ring closure reaction between the two acyclic compounds 1-deoxy-D-xylulose-5-phosphate (DXP) and 3-amino-2-oxopropyl phosphate (1-amino-acetone-3-phosphate or AAP) to form pyridoxine 5'-phosphate (PNP) and inorganic phosphate. This Chloroherpeton thalassium (strain ATCC 35110 / GB-78) protein is Pyridoxine 5'-phosphate synthase.